The sequence spans 187 residues: UPF0340 protein SPJ_0612 (187 aa).

Belongs to the UPF0340 family.

The protein is UPF0340 protein SPJ_0612 of Streptococcus pneumoniae (strain JJA).